A 498-amino-acid polypeptide reads, in one-letter code: XK-related protein 4 (498 aa).

Residues 24–46 (SEHSGSVQGLHPGAQPDSAGAGD) are disordered. The next 2 membrane-spanning stretches (helical) occupy residues 81–101 (CLWI…DVWL) and 111–131 (YWWF…VQLF). Residues 166–203 (SHGDVTAQHHPATPQRQASTASRNTTTNSTASTGLGPR) are disordered. A compositionally biased stretch (low complexity) spans 183–198 (ASTASRNTTTNSTAST). Transmembrane regions (helical) follow at residues 302–322 (LFIY…LWYL) and 332–352 (FAVP…VFML).

The protein belongs to the XK family.

Its subcellular location is the cell membrane. The catalysed reaction is a 1,2-diacyl-sn-glycero-3-phospho-L-serine(in) = a 1,2-diacyl-sn-glycero-3-phospho-L-serine(out). Functionally, phospholipid scramblase that promotes phosphatidylserine exposure on apoptotic cell surface. Phosphatidylserine is a specific marker only present at the surface of apoptotic cells and acts as a specific signal for engulfment. The chain is XK-related protein 4 from Tetraodon nigroviridis (Spotted green pufferfish).